A 275-amino-acid polypeptide reads, in one-letter code: Ribosomal RNA small subunit methyltransferase A (275 aa).

Positions 19, 21, 46, 71, 94, and 117 each coordinate S-adenosyl-L-methionine.

Belongs to the class I-like SAM-binding methyltransferase superfamily. rRNA adenine N(6)-methyltransferase family. RsmA subfamily.

It localises to the cytoplasm. It carries out the reaction adenosine(1518)/adenosine(1519) in 16S rRNA + 4 S-adenosyl-L-methionine = N(6)-dimethyladenosine(1518)/N(6)-dimethyladenosine(1519) in 16S rRNA + 4 S-adenosyl-L-homocysteine + 4 H(+). In terms of biological role, specifically dimethylates two adjacent adenosines (A1518 and A1519) in the loop of a conserved hairpin near the 3'-end of 16S rRNA in the 30S particle. May play a critical role in biogenesis of 30S subunits. The chain is Ribosomal RNA small subunit methyltransferase A from Burkholderia lata (strain ATCC 17760 / DSM 23089 / LMG 22485 / NCIMB 9086 / R18194 / 383).